Here is a 148-residue protein sequence, read N- to C-terminus: Snaclec 7 (148 aa).

An N-terminal signal peptide occupies residues M1–A23. Disulfide bonds link C27–C38, C55–C144, and C121–C136. One can recognise a C-type lectin domain in the interval H34–K145.

This sequence belongs to the snaclec family. In terms of assembly, heterodimer; disulfide-linked. In terms of tissue distribution, expressed by the venom gland.

It localises to the secreted. Functionally, interferes with one step of hemostasis (modulation of platelet aggregation, or coagulation cascade, for example). In Echis pyramidum leakeyi (Leakey's carpet viper), this protein is Snaclec 7.